Reading from the N-terminus, the 137-residue chain is Protein FrxA (137 aa).

The sequence is that of Protein FrxA (frxA) from Pyrococcus furiosus (strain ATCC 43587 / DSM 3638 / JCM 8422 / Vc1).